Consider the following 420-residue polypeptide: MLPGLRRLLQGPASACLLLTLLALPSVTPSCPMLCTCYSSPPTVSCQANNFSSVPLSLPPSTQRLFLQNNLIRSLRPGTFGPNLLTLWLFSNNLSTIHPGTFRHLQALEELDLGDNRHLRSLEPDTFQGLERLQSLHLYRCQLSSLPGNIFRGLVSLQYLYLQENSLLHLQDDLFADLANLSHLFLHGNRLRLLTEHVFRGLGSLDRLLLHGNRLQGVHRAAFHGLSRLTILYLFNNSLASLPGEALADLPALEFLRLNANPWACDCRARPLWAWFQRARVSSSDVTCATPPERQGRDLRALRDSDFQACPPPTPTRPGSRARGNSSSNHLYGVAEAGAPPADPSTLYRDLPAEDSRGRQGGDAPTEDDYWGGYGGEDQRGEQTCPGAACQAPADSRGPALSAGLRTPLLCLLPLALHHL.

An N-terminal signal peptide occupies residues 1-30 (MLPGLRRLLQGPASACLLLTLLALPSVTPS). Intrachain disulfides connect Cys31-Cys37 and Cys35-Cys46. The LRRNT domain occupies 31–60 (CPMLCTCYSSPPTVSCQANNFSSVPLSLPP). Asn50 carries an N-linked (GlcNAc...) asparagine glycan. 8 LRR repeats span residues 61 to 82 (STQR…TFGP), 83 to 104 (NLLT…TFRH), 107 to 129 (ALEE…TFQG), 132 to 153 (RLQS…IFRG), 156 to 177 (SLQY…LFAD), 180 to 201 (NLSH…VFRG), 204 to 225 (SLDR…AFHG), and 228 to 249 (RLTI…ALAD). N-linked (GlcNAc...) asparagine glycosylation is present at Asn93. N-linked (GlcNAc...) asparagine glycosylation occurs at Asn236. The region spanning 261–312 (NPWACDCRARPLWAWFQRARVSSSDVTCATPPERQGRDLRALRDSDFQACPP) is the LRRCT domain. 2 disulfide bridges follow: Cys265-Cys288 and Cys267-Cys310. Residues 286–399 (VTCATPPERQ…CQAPADSRGP (114 aa)) form a disordered region. Positions 294-306 (RQGRDLRALRDSD) are enriched in basic and acidic residues. The important for interaction with MAG stretch occupies residues 315–327 (PTRPGSRARGNSS). Basic and acidic residues predominate over residues 351 to 360 (LPAEDSRGRQ). A lipid anchor (GPI-anchor amidated glycine) is attached at Gly398. Residues 399–420 (PALSAGLRTPLLCLLPLALHHL) constitute a propeptide, removed in mature form.

It belongs to the Nogo receptor family. As to quaternary structure, interaction with MAG is controversial, and may be indirect. Interacts with MAG. Does not interact with OMG and RTN4. In terms of processing, undergoes zinc metalloproteinase-mediated ectodomain shedding in neuroblastoma cells; is released both as a full-length ectodomain and an N-terminal fragment containing the leucine-rich repeat (LRR) region of the protein. Post-translationally, N-glycosylated. In terms of tissue distribution, detected in brain. Detected in hippocampus neurons (at protein level).

It localises to the cell membrane. The protein localises to the membrane raft. It is found in the cell projection. The protein resides in the dendrite. Its subcellular location is the axon. It localises to the perikaryon. Functionally, cell surface receptor that plays a functionally redundant role in the inhibition of neurite outgrowth mediated by MAG. Plays a functionally redundant role in postnatal brain development. Contributes to normal axon migration across the brain midline and normal formation of the corpus callosum. Does not seem to play a significant role in regulating axon regeneration in the adult central nervous system. Protects motoneurons against apoptosis; protection against apoptosis is probably mediated by MAG. Like other family members, plays a role in restricting the number dendritic spines and the number of synapses that are formed during brain development. Signaling mediates activation of Rho and downstream reorganization of the actin cytoskeleton. The chain is Reticulon-4 receptor-like 2 from Mus musculus (Mouse).